The following is a 100-amino-acid chain: Large ribosomal subunit protein uL23 (100 aa).

The protein belongs to the universal ribosomal protein uL23 family. Part of the 50S ribosomal subunit. Contacts protein L29, and trigger factor when it is bound to the ribosome.

Its function is as follows. One of the early assembly proteins it binds 23S rRNA. One of the proteins that surrounds the polypeptide exit tunnel on the outside of the ribosome. Forms the main docking site for trigger factor binding to the ribosome. This Shewanella sp. (strain MR-4) protein is Large ribosomal subunit protein uL23.